The chain runs to 620 residues: Translocator protein BipB (620 aa).

Residues 58-95 are disordered; the sequence is QCDAQPAAHDARLDDKPALRAPQERDAPPLGASDTGSR. Basic and acidic residues predominate over residues 66–84; that stretch reads HDARLDDKPALRAPQERDA. Positions 309–339 form a coiled coil; sequence EMQAKREAELQKKSDEYQAQVKKAEEMQKTM. 3 helical membrane passes run 355–375, 401–421, and 430–450; these read FAAA…GLAL, AILK…LVAC, and LAGA…AAFV.

Belongs to the SctE/SipB/YopB family.

The protein localises to the secreted. Its subcellular location is the host membrane. Its function is as follows. Plays a role in the bacterium-induced formation of multinucleated giant cell (MNGC), which is formed after host cell fusion, as well as in the intercellular spreading of bacteria and in the induction of apoptosis in macrophages. May act in concert with other effector proteins to induce fusion of host cell membranes. The chain is Translocator protein BipB (bipB) from Burkholderia pseudomallei (strain 1106a).